We begin with the raw amino-acid sequence, 131 residues long: Protein FAM107B (131 aa).

Residue A2 is modified to N-acetylalanine. The disordered stretch occupies residues 39-79 (MNQKRGLAPQNKPELQKVMEKRRRDQVIKQKEEEAQKKKSD). An N6-acetyllysine modification is found at K50. Over residues 52 to 79 (ELQKVMEKRRRDQVIKQKEEEAQKKKSD) the composition is skewed to basic and acidic residues. Positions 61–112 (RRDQVIKQKEEEAQKKKSDLEIELLKRQQKLEQLELEKQKLQEEQENAPEFV) form a coiled coil.

Belongs to the FAM107 family. In terms of tissue distribution, expressed in the hippocampus and hypothalamus. Expressed in the pontine nuclei and reticulotegmental nucleus. Expressed in Purkinje cell and nuclear layers of the cerebelum. Expressed in the choroid plexus. Expressed in hippocampal granule neurons of the dente gyrus.

The chain is Protein FAM107B from Mus musculus (Mouse).